Reading from the N-terminus, the 795-residue chain is ATP-dependent RNA helicase DHX15 (795 aa).

Positions 1-108 (MSKRHRLDLG…HSTHAGHAGH (108 aa)) are disordered. Phosphoserine is present on Ser-15. The segment covering 20–62 (AGTDGKDRDRDRDREDRSKDRDRERDRGDREREREKEKEKELR) has biased composition (basic and acidic residues). The span at 79-108 (ASHSAHSTHSAHSAHSTHSAHSTHAGHAGH) shows a compositional bias: low complexity. The Helicase ATP-binding domain maps to 147–313 (TDILVRHQSF…FDNCPLLTIP (167 aa)). An ATP-binding site is contributed by 160–167 (GETGSGKT). The short motif at 260 to 263 (DEAH) is the DEAH box element. Residues 338 to 518 (TVIQIHMCEE…SVVLQLKKLG (181 aa)) enclose the Helicase C-terminal domain. Lys-488 bears the N6-acetyllysine mark. A Glycyl lysine isopeptide (Lys-Gly) (interchain with G-Cter in SUMO2) cross-link involves residue Lys-786.

It belongs to the DEAD box helicase family. DEAH subfamily. DDX15/PRP43 sub-subfamily. As to quaternary structure, component of the U11/U12 snRNPs that are part of the U12-type spliceosome. Identified in the Intron Large spliceosome complex (IL, also named intron lariat spliceosome), a post-mRNA release spliceosomal complex containing the excised intron, U2, U5 and U6 snRNPs, and splicing factors; the association may be transient. The IL complex exists in two distinct conformations, one with the DHX15 (ILS2) and one without (ILS1). Interacts with TFIP11 (via G-patch domain); indicative for a recruitment to the IL complex. Interacts with SSB/La. Interacts with GPATCH2 (via G-patch domain); promoting the RNA helicase activity. Interacts with NKRF (via G-patch domain); promoting the RNA helicase activity. Interacts with NLRP6.

Its subcellular location is the nucleus. The protein resides in the nucleolus. The catalysed reaction is ATP + H2O = ADP + phosphate + H(+). ATPase activity is enhanced upon binding to G-patch domain-containing proteins. G-patch domain-containing proteins act like a brace that tethers mobile sections of DHX15 together, stabilizing a functional conformation with high RNA affinity, thereby promoting the ATPase activity. Functionally, RNA helicase involved in mRNA processing and antiviral innate immunity. Pre-mRNA processing factor involved in disassembly of spliceosomes after the release of mature mRNA. In cooperation with TFIP11 seem to be involved in the transition of the U2, U5 and U6 snRNP-containing IL complex to the snRNP-free IS complex leading to efficient debranching and turnover of excised introns. Plays a key role in antiviral innate immunity by promoting both MAVS-dependent signaling and NLRP6 inflammasome. Acts as an RNA virus sensor: recognizes and binds viral double stranded RNA (dsRNA) and activates the MAVS-dependent signaling to produce interferon-beta and interferon lambda-3 (IFNL3). Involved in intestinal antiviral innate immunity together with NLRP6: recognizes and binds viral dsRNA and promotes activation of the NLRP6 inflammasome in intestinal epithelial cells to restrict infection by enteric viruses. The NLRP6 inflammasome acts by promoting maturation and secretion of IL18 in the extracellular milieu. Also involved in antibacterial innate immunity by promoting Wnt-induced antimicrobial protein expression in Paneth cells. The chain is ATP-dependent RNA helicase DHX15 from Pongo abelii (Sumatran orangutan).